Reading from the N-terminus, the 61-residue chain is MFTLKKSLLLLFFLGTINLSLCEEERNAEEERRDEPDERDVQVEKRLLPIVGNLLKSLLGK.

The signal sequence occupies residues methionine 1–cysteine 22. Residues glutamate 23–glutamate 44 constitute a propeptide that is removed on maturation. A Leucine amide modification is found at leucine 59.

It belongs to the frog skin active peptide (FSAP) family. Temporin subfamily. In terms of assembly, homo-oligomerizes in membranes as homodimers, homotrimers, or even homotetramers. Oligomerizes in presence of LPS. In Gram-positive bacterial mimetic membranes, the aggregation is weakly pronounced, and penetration proceeds more rapidly and is deeper than in Gram-negative bacterial mimetic membranes where aggregation is high. Homo-oligomerization is prevented by temporin-L. Expressed by the skin glands.

The protein resides in the secreted. The protein localises to the target cell membrane. Its subcellular location is the target cell. It is found in the target cell cytoplasm. Functionally, amphipathic alpha-helical antimicrobial peptide with potent activity against Gram-positive bacteria, weak activity against Gram-negative bacteria, and moderate activity against fungi. Mainly acts by causing membrane permeabilization, but is unable to forme pore-like openings. Is also able to penetrate eukaryotic cells (keratinocytes), and kill intracellular S.aureus (both wild-type and MRSA) without injuring host cells. Shows inhibitory effect on biofilm formation of Gram-positive bacteria, but not of Gram-negative bacteria. Shows antiviral activity against herpes simplex virus 1 (HSV-1) by disrupting the viral envelope. Also displays anti-leishmania activity by damaging parasite membrane. Does not show hemolytic activity. Acts synergistically with temporin-L that improves temporin-1Tb activity by preventing its self-association in lipopolysaccharides (LPS). In vitro, promotes cell migration and wound healing. The protein is Temporin-1Tb of Rana temporaria (European common frog).